The primary structure comprises 350 residues: MRASQSPMLDPRTRQLLRTLIARYIRDGEPVGSKTLAQHAGLDVSPATIRNILADLEDVGLLSSPHTSAGRVPTAHGYRVFVDSLVQMQPPGEEEVRRLRAELASGNGTQSLLGSASQMLSAMSHFVGVVSAPRREQFAFRHIDFVALDARRVLAILVFADNEVQNRVIEPRRAYEPAELERVANYLNAQFAGRALADIRACLLRELRMAKNEMEQLLAHSVDLASEALVPADADDMVMAGQTRLMGVQDLSDLDRLRELFEVFASKREILQLLERTIQAPGVRIFIGEETGMVSLEDVSLVTAPYTAHGQVLGVLGVIGPKRMAYDRLIPLVQTAADVLGAAMESPGTR.

The protein belongs to the HrcA family.

Functionally, negative regulator of class I heat shock genes (grpE-dnaK-dnaJ and groELS operons). Prevents heat-shock induction of these operons. This is Heat-inducible transcription repressor HrcA from Xanthomonas oryzae pv. oryzae (strain KACC10331 / KXO85).